The primary structure comprises 483 residues: 3-isopropylmalate dehydratase large subunit (483 aa).

Positions 361, 424, and 427 each coordinate [4Fe-4S] cluster.

Belongs to the aconitase/IPM isomerase family. LeuC type 1 subfamily. In terms of assembly, heterodimer of LeuC and LeuD. It depends on [4Fe-4S] cluster as a cofactor.

It carries out the reaction (2R,3S)-3-isopropylmalate = (2S)-2-isopropylmalate. It participates in amino-acid biosynthesis; L-leucine biosynthesis; L-leucine from 3-methyl-2-oxobutanoate: step 2/4. Its function is as follows. Catalyzes the isomerization between 2-isopropylmalate and 3-isopropylmalate, via the formation of 2-isopropylmaleate. This is 3-isopropylmalate dehydratase large subunit from Polaromonas naphthalenivorans (strain CJ2).